We begin with the raw amino-acid sequence, 157 residues long: SsrA-binding protein (157 aa).

The protein belongs to the SmpB family.

Its subcellular location is the cytoplasm. Required for rescue of stalled ribosomes mediated by trans-translation. Binds to transfer-messenger RNA (tmRNA), required for stable association of tmRNA with ribosomes. tmRNA and SmpB together mimic tRNA shape, replacing the anticodon stem-loop with SmpB. tmRNA is encoded by the ssrA gene; the 2 termini fold to resemble tRNA(Ala) and it encodes a 'tag peptide', a short internal open reading frame. During trans-translation Ala-aminoacylated tmRNA acts like a tRNA, entering the A-site of stalled ribosomes, displacing the stalled mRNA. The ribosome then switches to translate the ORF on the tmRNA; the nascent peptide is terminated with the 'tag peptide' encoded by the tmRNA and targeted for degradation. The ribosome is freed to recommence translation, which seems to be the essential function of trans-translation. In Bacillus licheniformis (strain ATCC 14580 / DSM 13 / JCM 2505 / CCUG 7422 / NBRC 12200 / NCIMB 9375 / NCTC 10341 / NRRL NRS-1264 / Gibson 46), this protein is SsrA-binding protein.